The primary structure comprises 601 residues: Glutathione-regulated potassium-efflux system protein KefB (601 aa).

13 helical membrane-spanning segments follow: residues 4–24 (ADLL…VPLA), 29–49 (IGAV…GLGF), 55–75 (EILH…GLEL), 87–107 (IFGV…GLLM), 111–131 (FLWQ…TAMA), 152–172 (VLLF…LLAG), 177–197 (HFDW…LIGG), 207–227 (FIAA…LVLS), 230–250 (LFMD…GVLL), 262–282 (AIDP…GMSL), 284–304 (LGVL…LVVI), 324–344 (MQFA…FSTA), and 356–376 (ALLL…MKGI). One can recognise an RCK N-terminal domain in the interval 400–519 (KPQVIVVGFG…AGVTQFSRET (120 aa)).

It belongs to the monovalent cation:proton antiporter 2 (CPA2) transporter (TC 2.A.37) family. KefB subfamily. In terms of assembly, interacts with the regulatory subunit KefG.

The protein resides in the cell inner membrane. Its function is as follows. Pore-forming subunit of a potassium efflux system that confers protection against electrophiles. Catalyzes K(+)/H(+) antiport. This Salmonella paratyphi C (strain RKS4594) protein is Glutathione-regulated potassium-efflux system protein KefB.